We begin with the raw amino-acid sequence, 200 residues long: Cytochrome c biogenesis ATP-binding export protein CcmA (200 aa).

An ABC transporter domain is found at 2–200 (LDVIELDFDY…NKADYEEYHL (199 aa)). 34 to 41 (GSNGAGKT) is an ATP binding site.

It belongs to the ABC transporter superfamily. CcmA exporter (TC 3.A.1.107) family. In terms of assembly, the complex is composed of two ATP-binding proteins (CcmA) and two transmembrane proteins (CcmB).

It localises to the cell inner membrane. The enzyme catalyses heme b(in) + ATP + H2O = heme b(out) + ADP + phosphate + H(+). Part of the ABC transporter complex CcmAB involved in the biogenesis of c-type cytochromes; once thought to export heme, this seems not to be the case, but its exact role is uncertain. Responsible for energy coupling to the transport system. In Legionella pneumophila (strain Lens), this protein is Cytochrome c biogenesis ATP-binding export protein CcmA.